The chain runs to 223 residues: Lipoprotein signal peptidase (223 aa).

Residues 1–20 (MNSAKVNPSGHAPTPAPTAS) form a disordered region. The next 4 membrane-spanning stretches (helical) occupy residues 32 to 52 (LFFG…EAIF), 65 to 85 (WIIE…VFGL), 91 to 111 (LVFA…LFFF), and 116 to 136 (SCWL…NLYD). Active-site residues include Asp156 and Asp175. The chain crosses the membrane as a helical span at residues 173–193 (IADSLLVTGAIMLLVQSFFFP). Positions 196–223 (PHGEADGNELPGRRAPDEPTEGTKPAAS) are disordered.

Belongs to the peptidase A8 family.

The protein localises to the cell inner membrane. It catalyses the reaction Release of signal peptides from bacterial membrane prolipoproteins. Hydrolyzes -Xaa-Yaa-Zaa-|-(S,diacylglyceryl)Cys-, in which Xaa is hydrophobic (preferably Leu), and Yaa (Ala or Ser) and Zaa (Gly or Ala) have small, neutral side chains.. It participates in protein modification; lipoprotein biosynthesis (signal peptide cleavage). In terms of biological role, this protein specifically catalyzes the removal of signal peptides from prolipoproteins. This Rhodopirellula baltica (strain DSM 10527 / NCIMB 13988 / SH1) protein is Lipoprotein signal peptidase.